The primary structure comprises 193 residues: Probable GTP-binding protein EngB (193 aa).

Positions 22 to 193 (SFPEIVFAGR…LAHFDQYICQ (172 aa)) constitute an EngB-type G domain. GTP contacts are provided by residues 30-37 (GRSNVGKS), 57-61 (GKTRL), 75-78 (DLPG), 142-145 (TKYD), and 172-174 (YSS). Positions 37 and 59 each coordinate Mg(2+).

Belongs to the TRAFAC class TrmE-Era-EngA-EngB-Septin-like GTPase superfamily. EngB GTPase family. Mg(2+) is required as a cofactor.

Functionally, necessary for normal cell division and for the maintenance of normal septation. This is Probable GTP-binding protein EngB from Pelodictyon phaeoclathratiforme (strain DSM 5477 / BU-1).